We begin with the raw amino-acid sequence, 182 residues long: Putative manganese efflux pump MntP (182 aa).

6 helical membrane-spanning segments follow: residues 6–26 (TVLVALALGCDAFAVGMGVGT), 37–57 (LSFHFGLFQMMMPIAGWFVGS), 59–79 (AADLVSTWGPWISFALLLFIG), 104–126 (SSLVMLSVATSMDALGVGFSFGI), 131–149 (LFLSAVWIGITAGIMTWGA), and 164–181 (METVGGLILVAIAVKLLL).

The protein belongs to the MntP (TC 9.B.29) family.

The protein localises to the cell inner membrane. Its function is as follows. Probably functions as a manganese efflux pump. This Syntrophobacter fumaroxidans (strain DSM 10017 / MPOB) protein is Putative manganese efflux pump MntP.